The chain runs to 256 residues: Undecaprenyl-diphosphatase (256 aa).

A run of 7 helical transmembrane segments spans residues M1 to V21, F41 to F61, V69 to L89, L96 to L116, V172 to D192, A207 to L227, and F233 to L253.

Belongs to the UppP family.

It localises to the cell inner membrane. The catalysed reaction is di-trans,octa-cis-undecaprenyl diphosphate + H2O = di-trans,octa-cis-undecaprenyl phosphate + phosphate + H(+). Functionally, catalyzes the dephosphorylation of undecaprenyl diphosphate (UPP). Confers resistance to bacitracin. The chain is Undecaprenyl-diphosphatase from Wolinella succinogenes (strain ATCC 29543 / DSM 1740 / CCUG 13145 / JCM 31913 / LMG 7466 / NCTC 11488 / FDC 602W) (Vibrio succinogenes).